Here is a 166-residue protein sequence, read N- to C-terminus: Phospholipase A2 inhibitor clone 06/08 (166 aa).

Positions 1-19 (MRLILLSGLLLLGIFLANG) are cleaved as a signal peptide. In terms of domain architecture, C-type lectin spans 46–161 (LRGAFLTVYK…CDDNLLVVCE (116 aa)). 2 N-linked (GlcNAc...) asparagine glycosylation sites follow: Asn-61 and Asn-122. Disulfide bonds link Cys-83–Cys-160 and Cys-138–Cys-152.

Belongs to the alpha-type phospholipase A2 inhibitor family. In terms of assembly, homotrimer; non-covalently linked. In terms of tissue distribution, expressed by the liver.

The protein resides in the secreted. This phospholipase A2 inhibitor binds directly phospholipase A2 in the presence or absence of calcium. This Bothrops neuwiedi (Neuwied's lancehead) protein is Phospholipase A2 inhibitor clone 06/08.